The primary structure comprises 322 residues: Ig gamma-2A chain C region (322 aa).

Ig-like domains are found at residues 6–98 (PSVY…KKIV), 115–212 (VFIF…KSIS), and 221–317 (PQVY…KSLS). 3 cysteine pairs are disulfide-bonded: C27–C82, C136–C196, and C242–C300. N172 is a glycosylation site (N-linked (GlcNAc...) asparagine).

The polypeptide is Ig gamma-2A chain C region (Igg-2a) (Rattus norvegicus (Rat)).